Here is a 67-residue protein sequence, read N- to C-terminus: ATP synthase F(0) complex subunit 8 (67 aa).

A helical transmembrane segment spans residues 8-24 (TWFTTILSTSFSIIHRL). An N6-acetyllysine; alternate modification is found at K54. K54 carries the N6-succinyllysine; alternate modification. Position 57 is an N6-acetyllysine (K57).

Belongs to the ATPase protein 8 family. Component of the ATP synthase complex composed at least of ATP5F1A/subunit alpha, ATP5F1B/subunit beta, ATP5MC1/subunit c (homooctomer), MT-ATP6/subunit a, MT-ATP8/subunit 8, ATP5ME/subunit e, ATP5MF/subunit f, ATP5MG/subunit g, ATP5MK/subunit k, ATP5MJ/subunit j, ATP5F1C/subunit gamma, ATP5F1D/subunit delta, ATP5F1E/subunit epsilon, ATP5PF/subunit F6, ATP5PB/subunit b, ATP5PD/subunit d, ATP5PO/subunit OSCP. ATP synthase complex consists of a soluble F(1) head domain (subunits alpha(3) and beta(3)) - the catalytic core - and a membrane F(0) domain - the membrane proton channel (subunits c, a, 8, e, f, g, k and j). These two domains are linked by a central stalk (subunits gamma, delta, and epsilon) rotating inside the F1 region and a stationary peripheral stalk (subunits F6, b, d, and OSCP). Interacts with PRICKLE3.

The protein localises to the mitochondrion membrane. Subunit 8, of the mitochondrial membrane ATP synthase complex (F(1)F(0) ATP synthase or Complex V) that produces ATP from ADP in the presence of a proton gradient across the membrane which is generated by electron transport complexes of the respiratory chain. ATP synthase complex consist of a soluble F(1) head domain - the catalytic core - and a membrane F(1) domain - the membrane proton channel. These two domains are linked by a central stalk rotating inside the F(1) region and a stationary peripheral stalk. During catalysis, ATP synthesis in the catalytic domain of F(1) is coupled via a rotary mechanism of the central stalk subunits to proton translocation. In vivo, can only synthesize ATP although its ATP hydrolase activity can be activated artificially in vitro. Part of the complex F(0) domain. The chain is ATP synthase F(0) complex subunit 8 from Glis glis (Fat dormouse).